A 237-amino-acid polypeptide reads, in one-letter code: Demethylmenaquinone methyltransferase (237 aa).

S-adenosyl-L-methionine-binding positions include threonine 58, aspartate 79, and 106–107; that span reads NA.

The protein belongs to the class I-like SAM-binding methyltransferase superfamily. MenG/UbiE family.

It carries out the reaction a 2-demethylmenaquinol + S-adenosyl-L-methionine = a menaquinol + S-adenosyl-L-homocysteine + H(+). Its pathway is quinol/quinone metabolism; menaquinone biosynthesis; menaquinol from 1,4-dihydroxy-2-naphthoate: step 2/2. Methyltransferase required for the conversion of demethylmenaquinol (DMKH2) to menaquinol (MKH2). This chain is Demethylmenaquinone methyltransferase, found in Bacillus mycoides (strain KBAB4) (Bacillus weihenstephanensis).